The primary structure comprises 77 residues: Translation initiation factor IF-1, chloroplastic (77 aa).

In terms of domain architecture, S1-like spans 1–71 (MKEQKWIHEG…TRGRIIYRLR (71 aa)).

Belongs to the IF-1 family. In terms of assembly, component of the 30S ribosomal translation pre-initiation complex which assembles on the 30S ribosome in the order IF-2 and IF-3, IF-1 and N-formylmethionyl-tRNA(fMet); mRNA recruitment can occur at any time during PIC assembly.

It localises to the plastid. The protein resides in the chloroplast. Functionally, one of the essential components for the initiation of protein synthesis. Stabilizes the binding of IF-2 and IF-3 on the 30S subunit to which N-formylmethionyl-tRNA(fMet) subsequently binds. Helps modulate mRNA selection, yielding the 30S pre-initiation complex (PIC). Upon addition of the 50S ribosomal subunit IF-1, IF-2 and IF-3 are released leaving the mature 70S translation initiation complex. This chain is Translation initiation factor IF-1, chloroplastic, found in Antirrhinum majus (Garden snapdragon).